Reading from the N-terminus, the 650-residue chain is DNA topoisomerase 3 (650 aa).

A Toprim domain is found at 1–134; sequence MRLFIAEKPS…KLNQIQRCLI (134 aa). Glutamate 7, aspartate 103, and aspartate 105 together coordinate Mg(2+). The 463-residue stretch at 155–617 folds into the Topo IA-type catalytic domain; it reads FIPLATSALA…TLTNFLPELM (463 aa). Positions 194–199 are interaction with DNA; sequence SVGRVQ. Tyrosine 342 acts as the O-(5'-phospho-DNA)-tyrosine intermediate in catalysis.

It belongs to the type IA topoisomerase family. Mg(2+) serves as cofactor.

It catalyses the reaction ATP-independent breakage of single-stranded DNA, followed by passage and rejoining.. In terms of biological role, releases the supercoiling and torsional tension of DNA, which is introduced during the DNA replication and transcription, by transiently cleaving and rejoining one strand of the DNA duplex. Introduces a single-strand break via transesterification at a target site in duplex DNA. The scissile phosphodiester is attacked by the catalytic tyrosine of the enzyme, resulting in the formation of a DNA-(5'-phosphotyrosyl)-enzyme intermediate and the expulsion of a 3'-OH DNA strand. The free DNA strand then undergoes passage around the unbroken strand, thus removing DNA supercoils. Finally, in the religation step, the DNA 3'-OH attacks the covalent intermediate to expel the active-site tyrosine and restore the DNA phosphodiester backbone. The polypeptide is DNA topoisomerase 3 (Pasteurella multocida (strain Pm70)).